The following is a 194-amino-acid chain: MLSAAALLPALLLGLLWPGAVRGRPPPGRLPPGPRQRRWDAALFARSVARLPAERRDAARDGDYLLGYKRLRRLYCNVGIGFHIQVLPDGRIDGIHSENRYSLLEISPVERGVVSIFGVRSGLFVAMNSKGKLYGSTHVNDECKFKEILLPNNYNAYESRIYPGMYIALSKNGRTKKGNKVSPTMTVTHFLPRI.

Residues 1-23 (MLSAAALLPALLLGLLWPGAVRG) form the signal peptide.

Belongs to the heparin-binding growth factors family. As to quaternary structure, reciprocal interactions may create a positive feedback loop between sonic hedgehog (SHH) and FGF4. In terms of tissue distribution, posterior ridge.

The protein resides in the secreted. Functionally, plays an important role in the regulation of embryonic development, cell proliferation, and cell differentiation. Required for normal limb development during embryogenesis. This chain is Fibroblast growth factor 4 (FGF4), found in Gallus gallus (Chicken).